A 467-amino-acid polypeptide reads, in one-letter code: Ribosomal protein uS12 methylthiotransferase RimO (467 aa).

Residues 1–110 (MDLHGCAKNQ…LPQLIDSMFP (110 aa)) form the MTTase N-terminal domain. C6, C42, C73, C153, C157, and C160 together coordinate [4Fe-4S] cluster. The Radical SAM core domain maps to 139-386 (LNFPRSTYIK…QNAQTSITEK (248 aa)). One can recognise a TRAM domain in the interval 389-467 (DSFIGKEIEV…NGFDLEAVAV (79 aa)).

Belongs to the methylthiotransferase family. RimO subfamily. [4Fe-4S] cluster is required as a cofactor.

It localises to the cytoplasm. The catalysed reaction is L-aspartate(89)-[ribosomal protein uS12]-hydrogen + (sulfur carrier)-SH + AH2 + 2 S-adenosyl-L-methionine = 3-methylsulfanyl-L-aspartate(89)-[ribosomal protein uS12]-hydrogen + (sulfur carrier)-H + 5'-deoxyadenosine + L-methionine + A + S-adenosyl-L-homocysteine + 2 H(+). Functionally, catalyzes the methylthiolation of an aspartic acid residue of ribosomal protein uS12. This is Ribosomal protein uS12 methylthiotransferase RimO from Treponema denticola (strain ATCC 35405 / DSM 14222 / CIP 103919 / JCM 8153 / KCTC 15104).